A 189-amino-acid polypeptide reads, in one-letter code: Protein GrpE (189 aa).

Over residues 1-14 (MTDHTPLQPKHEIT) the composition is skewed to basic and acidic residues. Residues 1 to 23 (MTDHTPLQPKHEITDQADQDTSA) form a disordered region.

The protein belongs to the GrpE family. Homodimer.

The protein resides in the cytoplasm. Participates actively in the response to hyperosmotic and heat shock by preventing the aggregation of stress-denatured proteins, in association with DnaK and GrpE. It is the nucleotide exchange factor for DnaK and may function as a thermosensor. Unfolded proteins bind initially to DnaJ; upon interaction with the DnaJ-bound protein, DnaK hydrolyzes its bound ATP, resulting in the formation of a stable complex. GrpE releases ADP from DnaK; ATP binding to DnaK triggers the release of the substrate protein, thus completing the reaction cycle. Several rounds of ATP-dependent interactions between DnaJ, DnaK and GrpE are required for fully efficient folding. The chain is Protein GrpE from Lawsonia intracellularis (strain PHE/MN1-00).